Consider the following 938-residue polypeptide: Catenin delta-1 (938 aa).

The residue at position 1 (M1) is an N-acetylmethionine. Residues 1–357 form a necessary and sufficient for interaction with CCDC85B region; sequence MDDSEVESTA…ASLDSLRKGM (357 aa). S4 bears the Phosphoserine mark. A coiled-coil region spans residues 10–46; that stretch reads ASILASVKEQEAQFEKLTRALEEERRHVSAQLERVRV. S47 is subject to Phosphoserine. T59 is modified (phosphothreonine). The residue at position 112 (Y112) is a Phosphotyrosine; by FYN. A Phosphoserine modification is found at S125. Y217 and Y221 each carry phosphotyrosine. S225 is subject to Phosphoserine. Y228 bears the Phosphotyrosine mark. Residues S230 and S252 each carry the phosphoserine modification. Phosphotyrosine is present on Y257. S268 and S269 each carry phosphoserine. Position 280 is a phosphotyrosine (Y280). Residue S288 is modified to Phosphoserine. A Phosphotyrosine modification is found at Y291. Phosphoserine is present on S300. A Phosphothreonine modification is found at T304. Residues S320, S346, S349, and S352 each carry the phosphoserine modification. 4 ARM repeats span residues 358-395, 398-437, 441-475, and 476-516; these read PPPS…HLCY, DKVK…NISF, QDNK…ITGT, and LWNL…NEDC. Residue K421 forms a Glycyl lysine isopeptide (Lys-Gly) (interchain with G-Cter in SUMO2) linkage. K517 participates in a covalent cross-link: Glycyl lysine isopeptide (Lys-Gly) (interchain with G-Cter in SUMO2). ARM repeat units follow at residues 534–573, 583–624, 653–693, 700–739, 740–780, and 781–826; these read LRNV…DSDS, LRNL…AKKG, ARGY…NLCA, RYIR…NLAV, DARN…SILN, and TINE…ALVL. S617 is subject to Phosphoserine. The short motif at 622–629 is the Nuclear localization signal (NLS) element; sequence KKGKDEWF. S713 bears the Phosphoserine mark. 6 positions are modified to phosphoserine: S811, S847, S857, S859, S861, and S864. Residues 855-938 form a disordered region; the sequence is NASRSQSSHS…LKGAPLMQKI (84 aa). The residue at position 865 (Y865) is a Phosphotyrosine. Phosphoserine is present on S868. T869 is subject to Phosphothreonine. The segment covering 875 to 888 has biased composition (basic and acidic residues); the sequence is RNQKSDKKPDREEI. S879 bears the Phosphoserine mark. K882 participates in a covalent cross-link: Glycyl lysine isopeptide (Lys-Gly) (interchain with G-Cter in SUMO2). A compositionally biased stretch (polar residues) spans 892 to 908; that stretch reads NMGSNTKSLDNNYSTLN. S899 is modified (phosphoserine). Y904 carries the post-translational modification Phosphotyrosine. Phosphothreonine is present on residues T906 and T916. The segment covering 909–922 has biased composition (basic and acidic residues); it reads ERGDHNRTLDRSGD. A Phosphoserine modification is found at S920.

The protein belongs to the beta-catenin family. As to quaternary structure, belongs to a multiprotein cell-cell adhesion complex that also contains E-cadherin/CDH1, alpha-catenin/CTNNA1, beta-catenin/CTNNB1, and gamma-catenin/JUP. Binds to the C-terminal fragment of PSEN1 and mutually competes for CDH1. Interacts with ZBTB33. Interacts with GLIS2. Interacts with FER. Interacts with NANOS1 (via N-terminal region). Interacts (via N-terminus) with GNA12; the interaction regulates CDH1-mediated cell-cell adhesion. Interacts with GNA13. Component of a cadherin:catenin adhesion complex composed of at least of CDH26, beta-catenin/CTNNB1, alpha-catenin/CTNNA1 and p120 catenin/CTNND1. Interacts with CCDC85B. Interacts with PLPP3; negatively regulates the PLPP3-mediated stabilization of CTNNB1. Interacts with DSG3; the interaction facilitates DSG3 localization and retention at cell-cell junctions. Interacts with CTNND1/p120-catenin; the interaction controls CADH5 endocytosis. Post-translationally, phosphorylated by FER and other protein-tyrosine kinases. Phosphorylated at Ser-288 by PAK5. Dephosphorylated by PTPRJ. As to expression, expressed in basal keratinocytes (at protein level).

The protein resides in the cell junction. It localises to the adherens junction. Its subcellular location is the cytoplasm. The protein localises to the nucleus. It is found in the cell membrane. Key regulator of cell-cell adhesion that associates with and regulates the cell adhesion properties of both C-, E- and N-cadherins, being critical for their surface stability. Promotes localization and retention of DSG3 at cell-cell junctions, via its interaction with DSG3. Beside cell-cell adhesion, regulates gene transcription through several transcription factors including ZBTB33/Kaiso2 and GLIS2, and the activity of Rho family GTPases and downstream cytoskeletal dynamics. Implicated both in cell transformation by SRC and in ligand-induced receptor signaling through the EGF, PDGF, CSF-1 and ERBB2 receptors. The sequence is that of Catenin delta-1 (Ctnnd1) from Mus musculus (Mouse).